We begin with the raw amino-acid sequence, 278 residues long: Protein canopy homolog 3 (278 aa).

An N-terminal signal peptide occupies residues 1–30 (MDSMPEPASRCLLLLPLLLLLLLLLPAPEL). Residues 47–271 (SKCEVCKYVA…EGIQKASPLT (225 aa)) form the Saposin B-type domain. 3 cysteine pairs are disulfide-bonded: Cys49/Cys206, Cys52/Cys194, and Cys104/Cys166. An N-linked (GlcNAc...) asparagine glycan is attached at Asn153. A coiled-coil region spans residues 153–179 (NETSAEVADLKKQCDVLVEEFEEVIED). The tract at residues 215 to 278 (KGDTAALGGK…PLTHSPPDEL (64 aa)) is disordered. The segment covering 233–243 (AKAAGGRSSSS) has biased composition (low complexity).

Belongs to the canopy family. In terms of assembly, interacts with HSP90B1; this interaction is disrupted in the presence of ATP. Interacts with TLR1, TLR2, TLR4 and TLR9. Strongest interaction with TLR4.

It is found in the endoplasmic reticulum. In terms of biological role, toll-like receptor (TLR)-specific co-chaperone for HSP90B1. Required for proper TLR folding, except that of TLR3, and hence controls TLR exit from the endoplasmic reticulum. Consequently, required for both innate and adaptive immune responses. The polypeptide is Protein canopy homolog 3 (CNPY3) (Homo sapiens (Human)).